The primary structure comprises 319 residues: MTEKALRLGTRRSKLAMAQSGQVADAVSQVTGRPVELVEITTYGDTSREHLAQIGGTGVFVAALRDALLRGEVDFAVHSLKDLPTAQHEGLVVAAIPEREDPRDVVVARDARKLTDLPRGARVGTGAPRRMAQLNAYARTHGMEIETVPIRGNVDTRIGYVRSGELDAVVLAAAGLNRVGRIDEVTDFLSVDTVLPAPGQGALAVECAADNASLIAALAELDDPFTRAAVTAERSLLAALEAGCSAPVGALADLLADGQTVKEMRLRGVVGTTDGSTLVQLSTTGPVPETHEAALALGGELAAEMLAQGAAGLMGERAQ.

Cys-244 carries the post-translational modification S-(dipyrrolylmethanemethyl)cysteine.

This sequence belongs to the HMBS family. As to quaternary structure, monomer. It depends on dipyrromethane as a cofactor.

It catalyses the reaction 4 porphobilinogen + H2O = hydroxymethylbilane + 4 NH4(+). Its pathway is porphyrin-containing compound metabolism; protoporphyrin-IX biosynthesis; coproporphyrinogen-III from 5-aminolevulinate: step 2/4. Its function is as follows. Tetrapolymerization of the monopyrrole PBG into the hydroxymethylbilane pre-uroporphyrinogen in several discrete steps. The chain is Porphobilinogen deaminase 1 (hemC1) from Streptomyces coelicolor (strain ATCC BAA-471 / A3(2) / M145).